The chain runs to 341 residues: S-adenosylmethionine:tRNA ribosyltransferase-isomerase (341 aa).

It belongs to the QueA family. In terms of assembly, monomer.

It localises to the cytoplasm. It carries out the reaction 7-aminomethyl-7-carbaguanosine(34) in tRNA + S-adenosyl-L-methionine = epoxyqueuosine(34) in tRNA + adenine + L-methionine + 2 H(+). The protein operates within tRNA modification; tRNA-queuosine biosynthesis. Its function is as follows. Transfers and isomerizes the ribose moiety from AdoMet to the 7-aminomethyl group of 7-deazaguanine (preQ1-tRNA) to give epoxyqueuosine (oQ-tRNA). The polypeptide is S-adenosylmethionine:tRNA ribosyltransferase-isomerase (Symbiobacterium thermophilum (strain DSM 24528 / JCM 14929 / IAM 14863 / T)).